Reading from the N-terminus, the 419-residue chain is Histidine--tRNA ligase (419 aa).

The protein belongs to the class-II aminoacyl-tRNA synthetase family. As to quaternary structure, homodimer.

The protein resides in the cytoplasm. It catalyses the reaction tRNA(His) + L-histidine + ATP = L-histidyl-tRNA(His) + AMP + diphosphate + H(+). This is Histidine--tRNA ligase from Mycoplasmoides gallisepticum (strain R(low / passage 15 / clone 2)) (Mycoplasma gallisepticum).